A 202-amino-acid chain; its full sequence is Transcription factor MUTE (202 aa).

The bHLH domain maps to 1 to 49; it reads MSHIAVERNRRRQMNEHLKSLRSLTPCFYIKRGDQASIIGGVIEFIKEL.

As to quaternary structure, homodimer. In terms of tissue distribution, leaf epidermis and flowers.

The protein localises to the nucleus. Functionally, transcription factor. Together with FMA and SPCH, regulates the stomata formation. Required for the differentiation of stomatal guard cells, by promoting successive asymmetric cell divisions and the formation of guard mother cells. Promotes the conversion of the leaf epidermis into stomata. The polypeptide is Transcription factor MUTE (MUTE) (Arabidopsis thaliana (Mouse-ear cress)).